A 475-amino-acid polypeptide reads, in one-letter code: ATP synthase subunit beta, chloroplastic (475 aa).

155–162 contributes to the ATP binding site; sequence GGAGVGKT.

The protein belongs to the ATPase alpha/beta chains family. In terms of assembly, F-type ATPases have 2 components, CF(1) - the catalytic core - and CF(0) - the membrane proton channel. CF(1) has five subunits: alpha(3), beta(3), gamma(1), delta(1), epsilon(1). CF(0) has four main subunits: a(1), b(1), b'(1) and c(9-12).

It is found in the plastid. The protein resides in the chloroplast thylakoid membrane. It catalyses the reaction ATP + H2O + 4 H(+)(in) = ADP + phosphate + 5 H(+)(out). Its function is as follows. Produces ATP from ADP in the presence of a proton gradient across the membrane. The catalytic sites are hosted primarily by the beta subunits. This Pyropia yezoensis (Susabi-nori) protein is ATP synthase subunit beta, chloroplastic.